A 308-amino-acid polypeptide reads, in one-letter code: Probable 5-dehydro-4-deoxyglucarate dehydratase (308 aa).

Belongs to the DapA family.

The catalysed reaction is 5-dehydro-4-deoxy-D-glucarate + H(+) = 2,5-dioxopentanoate + CO2 + H2O. It functions in the pathway carbohydrate acid metabolism; D-glucarate degradation; 2,5-dioxopentanoate from D-glucarate: step 2/2. This chain is Probable 5-dehydro-4-deoxyglucarate dehydratase, found in Bacillus licheniformis (strain ATCC 14580 / DSM 13 / JCM 2505 / CCUG 7422 / NBRC 12200 / NCIMB 9375 / NCTC 10341 / NRRL NRS-1264 / Gibson 46).